We begin with the raw amino-acid sequence, 610 residues long: Serine/threonine-protein kinase VRK1 (610 aa).

In terms of domain architecture, Protein kinase spans 32–384; sequence FIVGKQFATG…PRKRTTRKAV (353 aa). Residues 38 to 46 and K61 each bind ATP; that span reads FATGGFGRI. Residue D167 is the Proton acceptor of the active site. Disordered regions lie at residues 317–476, 498–530, 544–577, and 590–610; these read IQKT…NKVA, ISVA…VGEG, KKAK…KGRR, and ERLA…SSEV. A compositionally biased stretch (basic and acidic residues) spans 352–373; sequence AVKEESDNKDNDEVEVKPEKKA. A compositionally biased stretch (acidic residues) spans 388–397; the sequence is NDSDDNEEQY. The span at 447 to 458 shows a compositional bias: low complexity; it reads TTPSSAASTSRS. Positions 465–474 are enriched in polar residues; it reads LTSSTASSNK. A compositionally biased stretch (low complexity) spans 502–517; that stretch reads SDKSPTTSTPSSSSGL. 2 stretches are compositionally biased toward polar residues: residues 550–559 and 594–610; these read SGISSATKAS and SRQT…SSEV.

Belongs to the protein kinase superfamily. CK1 Ser/Thr protein kinase family. VRK subfamily. In terms of processing, autophosphorylates in vitro. As to expression, present in germ cells at all stages of progression from the mitotic zone to mature oocytes, but not in maturing spermatids (at the protein level). Expressed in the ventral nerve cord and vulva cells.

It localises to the nucleus. The protein localises to the cytoplasm. Its subcellular location is the cajal body. It carries out the reaction L-seryl-[protein] + ATP = O-phospho-L-seryl-[protein] + ADP + H(+). The catalysed reaction is L-threonyl-[protein] + ATP = O-phospho-L-threonyl-[protein] + ADP + H(+). Serine/threonine kinase that phosphorylates baf-1, thus regulating the association of baf-1 with chromatin and nuclear membrane proteins during nuclear envelope formation. May act through the egl-17 signaling pathway. Essential in hermaphrodites for formation of the vulva, uterus, and uterine seam cells and for development and maintenance of the somatic gonad and thus the germ line. Acts to prevent cep-1 from triggering an inappropriate cell cycle arrest, thereby promoting germ cell proliferation. Regulates anchor cell polarity and the timing of anchor cell invasion through the basement membranes separating vulval and somatic gonadal cells during the L3 larval stage. This Caenorhabditis elegans protein is Serine/threonine-protein kinase VRK1.